A 266-amino-acid chain; its full sequence is HTH-type transcriptional regulator MurR (266 aa).

In terms of domain architecture, HTH rpiR-type spans 1–77 (MLYLTKIRNA…MALIGEYSAS (77 aa)). The segment at residues 37–56 (SRQMAKQLGISQSSIVKFAQ) is a DNA-binding region (H-T-H motif). The 139-residue stretch at 128-266 (IIEVISKAPF…LLFVGLVQHQ (139 aa)) folds into the SIS domain.

As to quaternary structure, homotetramer.

It participates in amino-sugar metabolism; N-acetylmuramate degradation [regulation]. Represses the expression of the murPQ operon involved in the uptake and degradation of N-acetylmuramic acid (MurNAc). Binds to two adjacent inverted repeats within the operator region. MurNAc 6-phosphate, the substrate of MurQ, is the specific inducer that weakens binding of MurR to the operator. In Shigella flexneri serotype 5b (strain 8401), this protein is HTH-type transcriptional regulator MurR.